Consider the following 405-residue polypeptide: Argininosuccinate synthase (405 aa).

ATP contacts are provided by residues 13-21 and alanine 40; that span reads AYSGGLDTS. L-citrulline contacts are provided by tyrosine 91 and serine 96. Glycine 121 is a binding site for ATP. The L-aspartate site is built by threonine 123, asparagine 127, and aspartate 128. Residue asparagine 127 participates in L-citrulline binding. L-citrulline is bound by residues arginine 131, serine 182, serine 191, glutamate 267, and tyrosine 279.

This sequence belongs to the argininosuccinate synthase family. Type 1 subfamily. Homotetramer.

The protein localises to the cytoplasm. It carries out the reaction L-citrulline + L-aspartate + ATP = 2-(N(omega)-L-arginino)succinate + AMP + diphosphate + H(+). The protein operates within amino-acid biosynthesis; L-arginine biosynthesis; L-arginine from L-ornithine and carbamoyl phosphate: step 2/3. In Rhizobium meliloti (strain 1021) (Ensifer meliloti), this protein is Argininosuccinate synthase.